A 1220-amino-acid polypeptide reads, in one-letter code: Cullin-associated NEDD8-dissociated protein 1 (1220 aa).

HEAT repeat units lie at residues 1–35, 42–79, 121–157, 259–295, 365–410, 615–650, 680–700, 701–737, 738–775, 810–847, 850–887, and 1020–1057; these read MEEG…DANH, ESFP…KIPQ, FYTS…SLEI, ADYT…YQQV, LSRL…HVPR, IFLR…SVTD, TTAY…YLAE, SLLE…SILL, KSKN…VISK, FQSK…DYGK, LPAN…QSEK, and EVSQ…KSSV.

This sequence belongs to the CAND family.

The protein localises to the nucleus. Its function is as follows. Key assembly factor of SCF (SKP1-CUL1-F-box protein) E3 ubiquitin ligase complexes that promotes the exchange of the substrate-recognition F-box subunit in SCF complexes, thereby playing a key role in the cellular repertoire of SCF complexes. Acts as a F-box protein exchange factor. The chain is Cullin-associated NEDD8-dissociated protein 1 (knd1) from Schizosaccharomyces pombe (strain 972 / ATCC 24843) (Fission yeast).